The primary structure comprises 419 residues: Gamma-glutamyl phosphate reductase (419 aa).

The protein belongs to the gamma-glutamyl phosphate reductase family.

The protein localises to the cytoplasm. The enzyme catalyses L-glutamate 5-semialdehyde + phosphate + NADP(+) = L-glutamyl 5-phosphate + NADPH + H(+). The protein operates within amino-acid biosynthesis; L-proline biosynthesis; L-glutamate 5-semialdehyde from L-glutamate: step 2/2. In terms of biological role, catalyzes the NADPH-dependent reduction of L-glutamate 5-phosphate into L-glutamate 5-semialdehyde and phosphate. The product spontaneously undergoes cyclization to form 1-pyrroline-5-carboxylate. The polypeptide is Gamma-glutamyl phosphate reductase (Bordetella parapertussis (strain 12822 / ATCC BAA-587 / NCTC 13253)).